We begin with the raw amino-acid sequence, 289 residues long: Diaminopimelate epimerase (289 aa).

Residues asparagine 17, glutamine 47, and asparagine 67 each contribute to the substrate site. Cysteine 76 serves as the catalytic Proton donor. Substrate is bound by residues 77-78, asparagine 164, asparagine 198, and 216-217; these read GN and ER. The Proton acceptor role is filled by cysteine 225. Residue 226–227 participates in substrate binding; it reads GS.

It belongs to the diaminopimelate epimerase family. As to quaternary structure, homodimer.

It is found in the cytoplasm. The catalysed reaction is (2S,6S)-2,6-diaminopimelate = meso-2,6-diaminopimelate. The protein operates within amino-acid biosynthesis; L-lysine biosynthesis via DAP pathway; DL-2,6-diaminopimelate from LL-2,6-diaminopimelate: step 1/1. Catalyzes the stereoinversion of LL-2,6-diaminopimelate (L,L-DAP) to meso-diaminopimelate (meso-DAP), a precursor of L-lysine and an essential component of the bacterial peptidoglycan. The sequence is that of Diaminopimelate epimerase from Bradyrhizobium sp. (strain BTAi1 / ATCC BAA-1182).